A 562-amino-acid chain; its full sequence is NAD-dependent malic enzyme (562 aa).

Tyr-101 functions as the Proton donor in the catalytic mechanism. Arg-154 is a binding site for NAD(+). The active-site Proton acceptor is Lys-172. 3 residues coordinate a divalent metal cation: Glu-243, Asp-244, and Asp-267. 2 residues coordinate NAD(+): Asp-267 and Asn-415.

The protein belongs to the malic enzymes family. In terms of assembly, homotetramer. The cofactor is Mg(2+). Mn(2+) is required as a cofactor.

The catalysed reaction is (S)-malate + NAD(+) = pyruvate + CO2 + NADH. The enzyme catalyses oxaloacetate + H(+) = pyruvate + CO2. This Aliivibrio salmonicida (strain LFI1238) (Vibrio salmonicida (strain LFI1238)) protein is NAD-dependent malic enzyme.